A 185-amino-acid chain; its full sequence is Threonylcarbamoyl-AMP synthase (185 aa).

In terms of domain architecture, YrdC-like spans Ser-4–Gly-185.

The protein belongs to the SUA5 family. TsaC subfamily.

It localises to the cytoplasm. It catalyses the reaction L-threonine + hydrogencarbonate + ATP = L-threonylcarbamoyladenylate + diphosphate + H2O. In terms of biological role, required for the formation of a threonylcarbamoyl group on adenosine at position 37 (t(6)A37) in tRNAs that read codons beginning with adenine. Catalyzes the conversion of L-threonine, HCO(3)(-)/CO(2) and ATP to give threonylcarbamoyl-AMP (TC-AMP) as the acyladenylate intermediate, with the release of diphosphate. The chain is Threonylcarbamoyl-AMP synthase from Pseudomonas putida (strain W619).